We begin with the raw amino-acid sequence, 120 residues long: UPF0145 protein Mboo_1021 (120 aa).

It belongs to the UPF0145 family.

This is UPF0145 protein Mboo_1021 from Methanoregula boonei (strain DSM 21154 / JCM 14090 / 6A8).